The following is a 106-amino-acid chain: Insulin-like peptide 03 (106 aa).

Residues 1–18 form the signal peptide; sequence MLFYFGLAVIFLIDSSQT. Residues 19 to 34 constitute a propeptide that is removed on maturation; the sequence is QTLYKVNEVGGSQVDR. 3 disulfides stabilise this stretch: C37/C93, C49/C106, and C92/C97. A propeptide spans 52–82 (c peptide); it reads KKRQNIPRKYGRDPNNILEKEEFAKRFLRVR.

Belongs to the insulin family.

It localises to the secreted. In terms of biological role, insulin decreases blood glucose concentration. May have evolved to activate insulin receptors (INSR) in vertebrates. Molecular docking studies reveals unique interaction with the human insulin receptor. In vivo, insulin-like peptide injection reduces blood glucose levels in two models of zebrafish diabetes (streptozotocin- and glucose-induced). Also shorter swimming distance of zebrafish larvae, an effect which is not observed with human insulin. The polypeptide is Insulin-like peptide 03 (Exaiptasia diaphana (Tropical sea anemone)).